Reading from the N-terminus, the 365-residue chain is Aminomethyltransferase (365 aa).

The protein belongs to the GcvT family. In terms of assembly, the glycine cleavage system is composed of four proteins: P, T, L and H.

It catalyses the reaction N(6)-[(R)-S(8)-aminomethyldihydrolipoyl]-L-lysyl-[protein] + (6S)-5,6,7,8-tetrahydrofolate = N(6)-[(R)-dihydrolipoyl]-L-lysyl-[protein] + (6R)-5,10-methylene-5,6,7,8-tetrahydrofolate + NH4(+). The glycine cleavage system catalyzes the degradation of glycine. The polypeptide is Aminomethyltransferase (Desulfitobacterium hafniense (strain Y51)).